The primary structure comprises 99 residues: Sm-like protein LSM7 (99 aa).

The Sm domain occupies 6 to 86 (ETVLDLAKFV…VMLVSPTDGT (81 aa)).

Belongs to the snRNP Sm proteins family. As to quaternary structure, component of the heptameric LSM1-LSM7 complex that forms a seven-membered ring structure with a donut shape. The LSM subunits are arranged in the order LSM1, LSM2, LSM3, LSM6, LSM5, LSM7 and LSM4. Component of the heptameric LSM2-LSM8 complex that forms a seven-membered ring structure with a donut shape. The LSM subunits are arranged in the order LSM8, LSM2, LSM3, LSM6, LSM5, LSM7 and LSM4. LSM7 subunit interacts only with its two neighboring subunits, LSM5 and LSM4. Expressed in roots, leaves, stems, flowers and siliques.

The protein localises to the cytoplasm. It localises to the nucleus. Component of LSM protein complexes, which are involved in RNA processing. Component of the cytoplasmic LSM1-LSM7 complex which is involved in mRNA degradation by promoting decapping and leading to accurate 5'-3' mRNA decay. The cytoplasmic LSM1-LSM7 complex regulates developmental gene expression by the decapping of specific development-related transcripts. Component of the nuclear LSM2-LSM8 complex which is involved splicing nuclear mRNAs. LSM2-LSM8 binds directly to the U6 small nuclear RNAs (snRNAs) and is essential for accurate splicing of selected development-related mRNAs through the stabilization of the spliceosomal U6 snRNA. Plays a critical role in the regulation of development-related gene expression. The chain is Sm-like protein LSM7 from Arabidopsis thaliana (Mouse-ear cress).